The sequence spans 245 residues: Orotidine 5'-phosphate decarboxylase (245 aa).

Substrate contacts are provided by residues aspartate 22, lysine 44, 71-80, threonine 131, arginine 192, glutamine 201, glycine 221, and arginine 222; that span reads DLKFHDIPNT. The active-site Proton donor is lysine 73.

This sequence belongs to the OMP decarboxylase family. Type 1 subfamily. As to quaternary structure, homodimer.

The catalysed reaction is orotidine 5'-phosphate + H(+) = UMP + CO2. The protein operates within pyrimidine metabolism; UMP biosynthesis via de novo pathway; UMP from orotate: step 2/2. Catalyzes the decarboxylation of orotidine 5'-monophosphate (OMP) to uridine 5'-monophosphate (UMP). The chain is Orotidine 5'-phosphate decarboxylase from Salmonella paratyphi A (strain ATCC 9150 / SARB42).